A 56-amino-acid polypeptide reads, in one-letter code: Frontoxin I (56 aa).

4 disulfides stabilise this stretch: Cys3/Cys22, Cys17/Cys39, Cys41/Cys52, and Cys53/Cys56.

This sequence belongs to the three-finger toxin family. Short-chain subfamily. Type I alpha-neurotoxin sub-subfamily. In terms of tissue distribution, expressed by the venom gland.

Its subcellular location is the secreted. Binds to muscle nicotinic acetylcholine receptor (nAChR) and inhibit acetylcholine from binding to the receptor, thereby impairing neuromuscular transmission. This Micrurus frontalis (Coral snake) protein is Frontoxin I.